The following is a 131-amino-acid chain: MSWQTYVDDHLCCEIDGQHLTSAAILGHDGRVWVQSPNFPQFKPEEIAGIIKDFDEPGHLAPTGLFLGGTKYMVIQGEPGVVIRGKKGTGGITIKKTGMPLILGIYDEPMTPGQCNLVVERLGDYLVEQGF.

This sequence belongs to the profilin family. Occurs in many kinds of cells as a complex with monomeric actin in a 1:1 ratio.

The protein resides in the cytoplasm. Its subcellular location is the cytoskeleton. Functionally, binds to actin and affects the structure of the cytoskeleton. At high concentrations, profilin prevents the polymerization of actin, whereas it enhances it at low concentrations. By binding to PIP2, it inhibits the formation of IP3 and DG. The chain is Profilin-1 (PRO1) from Hordeum vulgare (Barley).